A 56-amino-acid chain; its full sequence is Large ribosomal subunit protein bL32 (56 aa).

Basic residues predominate over residues 1–16 (MAVQKNKKSRSKRGMR). A disordered region spans residues 1 to 36 (MAVQKNKKSRSKRGMRRSHDSLSTPQLSVDSTSGEL). The span at 21-34 (SLSTPQLSVDSTSG) shows a compositional bias: polar residues.

This sequence belongs to the bacterial ribosomal protein bL32 family.

The protein is Large ribosomal subunit protein bL32 of Shewanella sediminis (strain HAW-EB3).